Consider the following 288-residue polypeptide: Protoheme IX farnesyltransferase (288 aa).

The next 9 membrane-spanning stretches (helical) occupy residues 16–36 (VWSL…NRFT), 37–57 (LTNI…SMGA), 88–108 (VKGL…LLFF), 111–131 (YLAA…YSYL), 138–158 (WNII…WYTV), 162–182 (FSVL…IHVW), 210–230 (AICI…PVFF), 236–256 (TYMI…VLFV), and 265–285 (LKLF…VLIF).

This sequence belongs to the UbiA prenyltransferase family. Protoheme IX farnesyltransferase subfamily.

The protein localises to the cell membrane. The enzyme catalyses heme b + (2E,6E)-farnesyl diphosphate + H2O = Fe(II)-heme o + diphosphate. It functions in the pathway porphyrin-containing compound metabolism; heme O biosynthesis; heme O from protoheme: step 1/1. Functionally, converts heme B (protoheme IX) to heme O by substitution of the vinyl group on carbon 2 of heme B porphyrin ring with a hydroxyethyl farnesyl side group. This is Protoheme IX farnesyltransferase from Thermoplasma volcanium (strain ATCC 51530 / DSM 4299 / JCM 9571 / NBRC 15438 / GSS1).